A 106-amino-acid polypeptide reads, in one-letter code: Pyruvate decarboxylase 2 (106 aa).

The Mg(2+) site is built by Asn10 and Gly12.

The protein belongs to the TPP enzyme family. As to quaternary structure, homotetramer. The cofactor is a metal cation. Thiamine diphosphate is required as a cofactor.

The enzyme catalyses a 2-oxocarboxylate + H(+) = an aldehyde + CO2. This is Pyruvate decarboxylase 2 (PDC2) from Zea mays (Maize).